Reading from the N-terminus, the 122-residue chain is Acidic phospholipase A2 Tpu-E6b (122 aa).

Intrachain disulfides connect Cys-26–Cys-115, Cys-28–Cys-44, Cys-43–Cys-95, Cys-49–Cys-122, Cys-50–Cys-88, Cys-57–Cys-81, and Cys-75–Cys-86. Ca(2+) is bound by residues Tyr-27, Gly-29, and Gly-31. The active site involves His-47. Asp-48 contributes to the Ca(2+) binding site. Asp-89 is an active-site residue.

As to quaternary structure, monomer. The cofactor is Ca(2+). Expressed by the venom gland.

Its subcellular location is the secreted. The catalysed reaction is a 1,2-diacyl-sn-glycero-3-phosphocholine + H2O = a 1-acyl-sn-glycero-3-phosphocholine + a fatty acid + H(+). Its function is as follows. Snake venom phospholipase A2 (PLA2) that weakly inhibits ADP-induced platelet aggregation when tested on platelet rich plasma from human and rabbit blood (15-25% of inhibition at 5-10 ug of enzyme). Exhibits moderate hydrolytic activities toward L-dipalmitoyl phosphatidylcholine. PLA2 catalyzes the calcium-dependent hydrolysis of the 2-acyl groups in 3-sn-phosphoglycerides. This Craspedocephalus puniceus (Flat-nosed pitviper) protein is Acidic phospholipase A2 Tpu-E6b.